The following is a 266-amino-acid chain: Glutamate racemase (266 aa).

Residues D10 to S11 and Y42 to G43 contribute to the substrate site. Catalysis depends on C73, which acts as the Proton donor/acceptor. N74 to T75 provides a ligand contact to substrate. C183 serves as the catalytic Proton donor/acceptor. Position 184-185 (T184–H185) interacts with substrate.

This sequence belongs to the aspartate/glutamate racemases family.

The enzyme catalyses L-glutamate = D-glutamate. The protein operates within cell wall biogenesis; peptidoglycan biosynthesis. Provides the (R)-glutamate required for cell wall biosynthesis. In Lactobacillus johnsonii (strain CNCM I-12250 / La1 / NCC 533), this protein is Glutamate racemase.